Reading from the N-terminus, the 62-residue chain is Large ribosomal subunit protein bL28 (62 aa).

Belongs to the bacterial ribosomal protein bL28 family.

This is Large ribosomal subunit protein bL28 from Carboxydothermus hydrogenoformans (strain ATCC BAA-161 / DSM 6008 / Z-2901).